Reading from the N-terminus, the 1147-residue chain is Myosin heavy chain IB (1147 aa).

The region spanning 9–677 (RGVDDLVLMP…TLFHLEECLD (669 aa)) is the Myosin motor domain. An ATP-binding site is contributed by 103–110 (GESGAGKT). Ser315 is modified (phosphoserine). Residues 551-573 (CDALMEALSRCSPHYIRCIKPND) are actin-binding. The TH1 domain occupies 715-900 (KERQRHSVNR…RANIQIGIAT (186 aa)). 2 disordered regions span residues 901-954 (GLPK…YSQP) and 969-1089 (AAVP…APAA). 2 stretches are compositionally biased toward gly residues: residues 916–951 (SGGG…GGGY) and 975–1079 (GRGG…GAGR). Residues 1090–1147 (PAKPQVKALYDYDAQTGDELTFKEGDTIIVHQKDPAGWWEGELNGKRGWVPANYVQDI) form the SH3 domain.

The protein belongs to the TRAFAC class myosin-kinesin ATPase superfamily. Myosin family. In terms of assembly, myosin I heavy chain is single-headed. Dimer of a heavy and a light chain. Inability to self-assemble into filaments.

Myosin is a protein that binds to F-actin and has ATPase activity that is activated by F-actin. This Acanthamoeba castellanii (Amoeba) protein is Myosin heavy chain IB (MIB).